Here is a 538-residue protein sequence, read N- to C-terminus: Phosphoenolpyruvate carboxykinase (ATP) (538 aa).

Substrate contacts are provided by arginine 61, tyrosine 195, and lysine 201. ATP contacts are provided by residues lysine 201, histidine 220, and 236–244 (GLSGTGKTT). Mn(2+)-binding residues include lysine 201 and histidine 220. A Mn(2+)-binding site is contributed by aspartate 257. Residues glutamate 285, arginine 323, and threonine 449 each contribute to the ATP site. Substrate is bound at residue arginine 323.

The protein belongs to the phosphoenolpyruvate carboxykinase (ATP) family. It depends on Mn(2+) as a cofactor.

It is found in the cytoplasm. It carries out the reaction oxaloacetate + ATP = phosphoenolpyruvate + ADP + CO2. It participates in carbohydrate biosynthesis; gluconeogenesis. Its function is as follows. Involved in the gluconeogenesis. Catalyzes the conversion of oxaloacetate (OAA) to phosphoenolpyruvate (PEP) through direct phosphoryl transfer between the nucleoside triphosphate and OAA. The polypeptide is Phosphoenolpyruvate carboxykinase (ATP) (Bradyrhizobium diazoefficiens (strain JCM 10833 / BCRC 13528 / IAM 13628 / NBRC 14792 / USDA 110)).